Reading from the N-terminus, the 124-residue chain is Ribonuclease pancreatic (124 aa).

The span at Lys-1 to Pro-15 shows a compositional bias: basic and acidic residues. The segment at Lys-1–Asn-24 is disordered. Substrate contacts are provided by Lys-7 and Arg-10. The Proton acceptor role is filled by His-12. N-linked (GlcNAc...) asparagine glycans are attached at residues Asn-21 and Asn-34. 4 cysteine pairs are disulfide-bonded: Cys-26–Cys-84, Cys-40–Cys-95, Cys-58–Cys-110, and Cys-65–Cys-72. Substrate contacts are provided by residues Lys-41 to Thr-45 and Lys-66. N-linked (GlcNAc...) asparagine glycosylation is present at Asn-76. Substrate is bound at residue Arg-85. His-119 (proton donor) is an active-site residue.

This sequence belongs to the pancreatic ribonuclease family. As to quaternary structure, monomer. Interacts with and forms tight 1:1 complexes with RNH1. Dimerization of two such complexes may occur. Interaction with RNH1 inhibits this protein. As to expression, pancreas.

It is found in the secreted. The catalysed reaction is an [RNA] containing cytidine + H2O = an [RNA]-3'-cytidine-3'-phosphate + a 5'-hydroxy-ribonucleotide-3'-[RNA].. The enzyme catalyses an [RNA] containing uridine + H2O = an [RNA]-3'-uridine-3'-phosphate + a 5'-hydroxy-ribonucleotide-3'-[RNA].. Its function is as follows. Endonuclease that catalyzes the cleavage of RNA on the 3' side of pyrimidine nucleotides. Acts on single-stranded and double-stranded RNA. The chain is Ribonuclease pancreatic (RNASE1) from Sus scrofa (Pig).